A 723-amino-acid polypeptide reads, in one-letter code: Methionine--tRNA ligase (723 aa).

The 'HIGH' region motif lies at 11 to 21 (PYANGPIHAGH). Zn(2+) is bound by residues Cys-143, Cys-146, Cys-156, and Cys-159. Residues 344–348 (KFSTS) carry the 'KMSKS' region motif. Position 347 (Thr-347) interacts with ATP. The region spanning 623–723 (DFAKLDLRVG…KEVKLGAKVR (101 aa)) is the tRNA-binding domain.

This sequence belongs to the class-I aminoacyl-tRNA synthetase family. MetG type 1 subfamily. Homodimer. Zn(2+) serves as cofactor.

The protein resides in the cytoplasm. The enzyme catalyses tRNA(Met) + L-methionine + ATP = L-methionyl-tRNA(Met) + AMP + diphosphate. In terms of biological role, is required not only for elongation of protein synthesis but also for the initiation of all mRNA translation through initiator tRNA(fMet) aminoacylation. The protein is Methionine--tRNA ligase of Pyrococcus horikoshii (strain ATCC 700860 / DSM 12428 / JCM 9974 / NBRC 100139 / OT-3).